The primary structure comprises 601 residues: ATP-dependent lipid A-core flippase (601 aa).

6 helical membrane passes run 35 to 55 (FAVA…LAFL), 77 to 97 (LAII…AILM), 150 to 170 (AVTS…VIFY), 173 to 193 (WQLA…IAKF), 263 to 283 (MEFL…YQVI), and 286 to 306 (SSTP…YEPV). An ABC transmembrane type-1 domain is found at 36-318 (AVAMVCMLIA…LTNVNNTIQQ (283 aa)). The ABC transporter domain maps to 352–585 (IEIRNISFAY…RGEYYKLHQL (234 aa)). 384 to 391 (GMSGGGKT) provides a ligand contact to ATP.

It belongs to the ABC transporter superfamily. Lipid exporter (TC 3.A.1.106) family. Homodimer.

The protein resides in the cell inner membrane. It catalyses the reaction ATP + H2O + lipid A-core oligosaccharideSide 1 = ADP + phosphate + lipid A-core oligosaccharideSide 2.. Its function is as follows. Involved in lipopolysaccharide (LPS) biosynthesis. Translocates lipid A-core from the inner to the outer leaflet of the inner membrane. Transmembrane domains (TMD) form a pore in the inner membrane and the ATP-binding domain (NBD) is responsible for energy generation. This is ATP-dependent lipid A-core flippase from Syntrophus aciditrophicus (strain SB).